We begin with the raw amino-acid sequence, 829 residues long: Periplasmic nitrate reductase (829 aa).

The segment at residues 1–30 (MKMTRRAFVKANAAASAAAVAGITLPASAA) is a signal peptide (tat-type signal). In terms of domain architecture, 4Fe-4S Mo/W bis-MGD-type spans 41-97 (ITWDKAPCRFCGTGCSVLVGTQNGKVVATQGDPEAPVNKGLNCIKGYFLSKIMYGQD). [4Fe-4S] cluster is bound by residues Cys-48, Cys-51, Cys-55, and Cys-83. Residues Lys-85, Gln-152, Asn-177, Cys-181, 214–221 (WGSNMAEM), 245–249 (STYYH), 264–266 (QSD), Met-374, Gln-378, Asn-484, 510–511 (SD), Lys-533, Asp-560, and 718–727 (TGRVLEHWHT) each bind Mo-bis(molybdopterin guanine dinucleotide). Residue Phe-794 participates in substrate binding. Mo-bis(molybdopterin guanine dinucleotide) contacts are provided by Asn-802 and Lys-819.

This sequence belongs to the prokaryotic molybdopterin-containing oxidoreductase family. NasA/NapA/NarB subfamily. As to quaternary structure, component of the periplasmic nitrate reductase NapAB complex composed of NapA and NapB. [4Fe-4S] cluster serves as cofactor. The cofactor is Mo-bis(molybdopterin guanine dinucleotide). Predicted to be exported by the Tat system. The position of the signal peptide cleavage has not been experimentally proven.

It is found in the periplasm. The enzyme catalyses 2 Fe(II)-[cytochrome] + nitrate + 2 H(+) = 2 Fe(III)-[cytochrome] + nitrite + H2O. Its function is as follows. Catalytic subunit of the periplasmic nitrate reductase complex NapAB. Receives electrons from NapB and catalyzes the reduction of nitrate to nitrite. In Vibrio parahaemolyticus serotype O3:K6 (strain RIMD 2210633), this protein is Periplasmic nitrate reductase.